We begin with the raw amino-acid sequence, 103 residues long: A-type ATP synthase subunit F (103 aa).

This sequence belongs to the V-ATPase F subunit family. As to quaternary structure, has multiple subunits with at least A(3), B(3), C, D, E, F, H, I and proteolipid K(x).

It is found in the cell membrane. Its function is as follows. Component of the A-type ATP synthase that produces ATP from ADP in the presence of a proton gradient across the membrane. The chain is A-type ATP synthase subunit F from Pyrococcus abyssi (strain GE5 / Orsay).